A 357-amino-acid polypeptide reads, in one-letter code: EGF-like domain-containing protein 2 (357 aa).

The signal sequence occupies residues 1-20 (MPPSLSHLFLLSTFASLALC). 2 consecutive EGF-like domains span residues 21–55 (SFYC…FNCG) and 61–93 (ISAA…PTCQ). Disulfide bonds link Cys24-Cys37, Cys31-Cys43, Cys45-Cys54, Cys65-Cys75, Cys69-Cys81, and Cys83-Cys92.

As to expression, prismatic layer of shell (at protein level). Expressed primarily in the mantle with highest level in the mantle edge and lower level in the mantle pallium.

It localises to the secreted. The polypeptide is EGF-like domain-containing protein 2 (Pinctada maxima (Silver-lipped pearl oyster)).